Here is a 533-residue protein sequence, read N- to C-terminus: Probable fucosyltransferase 5 (533 aa).

Residues 1-13 (MYQKFQISGKIVK) lie on the Cytoplasmic side of the membrane. The helical; Signal-anchor for type II membrane protein transmembrane segment at 14–34 (TLGLKMKVLIAVSFGSLLFIL) threads the bilayer. Residues 35–533 (SYSNNFNNKL…YGGLKLYDEF (499 aa)) lie on the Lumenal side of the membrane. 5 N-linked (GlcNAc...) asparagine glycosylation sites follow: asparagine 202, asparagine 227, asparagine 374, asparagine 396, and asparagine 475.

The protein belongs to the glycosyltransferase 37 family. In terms of tissue distribution, expressed in roots, leaves, flowers and siliques.

It localises to the golgi apparatus. The protein localises to the golgi stack membrane. It participates in protein modification; protein glycosylation. Functionally, may be involved in cell wall biosynthesis. May act as a fucosyltransferase. The polypeptide is Probable fucosyltransferase 5 (FUT5) (Arabidopsis thaliana (Mouse-ear cress)).